Consider the following 396-residue polypeptide: uncharacterized protein (396 aa).

This is an uncharacterized protein from Pseudomonas amyloderamosa.